The primary structure comprises 945 residues: Leucine--tRNA ligase (945 aa).

A 'HIGH' region motif is present at residues 43–53 (PYPNGAIHIGH). The 'KMSKS' region signature appears at 638–642 (KMSKS). Position 641 (Lys641) interacts with ATP.

It belongs to the class-I aminoacyl-tRNA synthetase family.

It is found in the cytoplasm. It catalyses the reaction tRNA(Leu) + L-leucine + ATP = L-leucyl-tRNA(Leu) + AMP + diphosphate. The chain is Leucine--tRNA ligase from Pyrobaculum aerophilum (strain ATCC 51768 / DSM 7523 / JCM 9630 / CIP 104966 / NBRC 100827 / IM2).